The following is a 198-amino-acid chain: Recombination protein RecR (198 aa).

Residues 57–72 (CSVCGHITENDPCYIC) form a C4-type zinc finger. Positions 80-175 (SVICVVEDDK…KVTRLAQGLS (96 aa)) constitute a Toprim domain.

The protein belongs to the RecR family.

Its function is as follows. May play a role in DNA repair. It seems to be involved in an RecBC-independent recombinational process of DNA repair. It may act with RecF and RecO. The sequence is that of Recombination protein RecR from Staphylococcus haemolyticus (strain JCSC1435).